The primary structure comprises 471 residues: Adenosylhomocysteinase (471 aa).

Positions 60, 135, and 196 each coordinate substrate. 197-199 lines the NAD(+) pocket; sequence TTT. Substrate contacts are provided by Lys226 and Asp230. Residues Asn231, 260–265, Glu283, Asn318, 339–341, and Asn387 contribute to the NAD(+) site; these read GYGDVG and IGH.

Belongs to the adenosylhomocysteinase family. NAD(+) is required as a cofactor.

Its subcellular location is the cytoplasm. The catalysed reaction is S-adenosyl-L-homocysteine + H2O = L-homocysteine + adenosine. It functions in the pathway amino-acid biosynthesis; L-homocysteine biosynthesis; L-homocysteine from S-adenosyl-L-homocysteine: step 1/1. Its function is as follows. May play a key role in the regulation of the intracellular concentration of adenosylhomocysteine. This chain is Adenosylhomocysteinase, found in Chlorobaculum parvum (strain DSM 263 / NCIMB 8327) (Chlorobium vibrioforme subsp. thiosulfatophilum).